We begin with the raw amino-acid sequence, 301 residues long: Probable 2-dehydro-3-deoxy-D-pentonate aldolase YjhH (301 aa).

Residues Thr-46 and Tyr-109 each act as charge relay system in the active site. Tyr-135 (proton donor) is an active-site residue. The active-site Schiff-base intermediate with substrate is the Lys-164.

It belongs to the DapA family.

It localises to the cytoplasm. It catalyses the reaction 2-dehydro-3-deoxy-D-arabinonate = glycolaldehyde + pyruvate. Functionally, functions as a 2-dehydro-3-deoxy-D-pentonate aldolase. The polypeptide is Probable 2-dehydro-3-deoxy-D-pentonate aldolase YjhH (yjhH) (Escherichia coli (strain K12)).